The primary structure comprises 944 residues: MKPFSKNDRRRWSFDSVSAGKTAVGSASTSPGTEYSINGDQEFVEVTIDLQDDDTIVLRSVEPATAINVIGDISDDNTGIMTPVSISRSPTMKRTSSNRFRQFSQELKAEAVAKAKQLSQELKRFSWSRSFSGNLTTTSTAANQSGGAGGGLVNSALEARALRKQRAQLDRTRSSAQRALRGLRFISNKQKNVDGWNDVQSNFEKFEKNGYIYRSDFAQCIGMKDSKEFALELFDALSRRRRLKVEKINHDELYEYWSQINDESFDSRLQIFFDIVDKNEDGRITEEEVKEIIMLSASANKLSRLKEQAEEYAALIMEELDPERLGYIELWQLETLLLQKDTYLNYSQALSYTSQALSQNLQGLRGKSRIHRMSSDFVYIMQENWKRIWVLSLWIMIMIGLFLWKFFQYKQKDAFHVMGYCLLTAKGAAETLKFNMALILFPVCRNTITWLRSTRLSYFVPFDDNINFHKTIAGAIVVAVILHIGDHLACDFPRIVRATEYDYNRYLFHYFQTKQPTYFDLVKGPEGITGILMVILMIISFTLATRWFRRNLVKLPKPFDRLTGFNAFWYSHHLFVIVYILLILHGIFLYFAKPWYVRTTWMYLAVPVLLYGGERTLRYFRSGSYSVRLLKVAIYPGNVLTLQMSKPTQFRYKSGQYMFVQCPAVSPFEWHPFSITSAPEDDYISIHIRQLGDWTQELKRVFSEVCEPPVGGKSGLLRADETTKKSLPKLLIDGPYGAPAQDYRKYDVLLLVGLGIGATPFISILKDLLNNIVKMEEHADSISDFSRSSEYSTGSNGDTPRRKRILKTTNAYFYWVTREQGSFDWFKGVMNEVAELDQRGVIEMHNYLTSVYEEGDARSALITMVQALNHAKNGVDIVSGTRVRTHFARPNWKKVLTKLSSKHCNARIGVFYCGVPVLGKELSKLCNTFNQKGSTKFEFHKEHF.

At 2 to 387 (KPFSKNDRRR…VYIMQENWKR (386 aa)) the chain is on the cytoplasmic side. Coiled coils occupy residues 102–126 (QFSQ…KRFS) and 157–184 (LEAR…RGLR). EF-hand-like stretches follow at residues 207-215 (EKNGYIYRS) and 241-252 (RRLKVEKINHDE). EF-hand domains are found at residues 264–299 (SFDS…SASA) and 308–343 (QAEE…KDTY). Residues Asp277, Asn279, Asp281, Arg283, Glu288, Asp321, and Tyr327 each coordinate Ca(2+). Ser354 and Ser358 each carry phosphoserine. The chain crosses the membrane as a helical span at residues 388–408 (IWVLSLWIMIMIGLFLWKFFQ). At 409 to 475 (YKQKDAFHVM…INFHKTIAGA (67 aa)) the chain is on the extracellular side. The Ferric oxidoreductase domain maps to 426–583 (KGAAETLKFN…LFVIVYILLI (158 aa)). Residues 476-492 (IVVAVILHIGDHLACDF) traverse the membrane as a helical segment. Over 493-527 (PRIVRATEYDYNRYLFHYFQTKQPTYFDLVKGPEG) the chain is Cytoplasmic. A helical transmembrane segment spans residues 528-548 (ITGILMVILMIISFTLATRWF). The Extracellular segment spans residues 549–570 (RRNLVKLPKPFDRLTGFNAFWY). A helical transmembrane segment spans residues 571–591 (SHHLFVIVYILLILHGIFLYF). The Cytoplasmic segment spans residues 592–599 (AKPWYVRT). A helical transmembrane segment spans residues 600 to 617 (TWMYLAVPVLLYGGERTL). The Extracellular portion of the chain corresponds to 618-744 (RYFRSGSYSV…PYGAPAQDYR (127 aa)). The FAD-binding FR-type domain maps to 622-742 (SGSYSVRLLK…DGPYGAPAQD (121 aa)). The chain crosses the membrane as a helical span at residues 745-765 (KYDVLLLVGLGIGATPFISIL). Residues 766-944 (KDLLNNIVKM…TKFEFHKEHF (179 aa)) are Cytoplasmic-facing.

The protein belongs to the RBOH (TC 5.B.1.3) family. As to quaternary structure, monomer and homodimer. Interacts (via N-terminus) with CIPK26. Interacts (via N-terminus) with SRC2. Post-translationally, not glycosylated. Phosphorylated by CIPK26. As to expression, expressed in roots, stems, seedlings, inflorescences, leaves and guard cells.

The protein resides in the cell membrane. Inhibited by diphenylene iodonium (DPI). Its function is as follows. Calcium-dependent NADPH oxidase that generates superoxide. Generates reactive oxygen species (ROS) during incompatible interactions with pathogens and is important in the regulation of the hypersensitive response (HR). Involved in abscisic acid-induced stomatal closing and in UV-B and abscisic acid ROS-dependent signaling. This is Respiratory burst oxidase homolog protein F (RBOHF) from Arabidopsis thaliana (Mouse-ear cress).